The sequence spans 130 residues: MNIIEQLEREEIARLAKTIPDFEPGDTVIVNVRVKEGERTRVQAYEGVCIARNGGGLNESFTVRKISYGEGVERVFPVHSPMIDSIKVVRRGKVRRAKLYYLRDRRGKSARIVERNDRPAKAEKAPAAAE.

Belongs to the bacterial ribosomal protein bL19 family.

Functionally, this protein is located at the 30S-50S ribosomal subunit interface and may play a role in the structure and function of the aminoacyl-tRNA binding site. In Methylorubrum populi (strain ATCC BAA-705 / NCIMB 13946 / BJ001) (Methylobacterium populi), this protein is Large ribosomal subunit protein bL19.